We begin with the raw amino-acid sequence, 522 residues long: 4-chlorobenzoate--CoA ligase (522 aa).

Residues 161-169 (TSGTTGLPK), 300-305 (DIYGTT), and N410 contribute to the ATP site.

This sequence belongs to the ATP-dependent AMP-binding enzyme family. As to quaternary structure, homodimer. Mg(2+) serves as cofactor.

It carries out the reaction 4-chlorobenzoate + ATP + CoA = 4-chlorobenzoyl-CoA + AMP + diphosphate. The protein operates within xenobiotic degradation; 4-chlorobenzoate degradation; 4-hydroxybenzoate from 4-chlorobenzoate: step 2/3. Catalyzes the formation of chlorobenzoyl-CoA via a 2 step reaction. First 4-chlorobenzoate is adenylated by ATP, followed by acyl transfer from the 4-chlorobenzoyl-AMP intermediate to CoA. Benzoate, 4-bromobenzoate, 4-iodobenzoate and 4-fluorobenzoate also act as substrates. Inactive towards 4-nitrobenzoate. This is 4-chlorobenzoate--CoA ligase from Arthrobacter sp.